The primary structure comprises 103 residues: Histone H4.2 (103 aa).

Positions 1–14 (MSGRGKGGKGLGKG) are enriched in gly residues. Residues 1–20 (MSGRGKGGKGLGKGGAKRHR) are disordered. K6 is modified (N6-acetyl-N6-methyllysine; alternate). N6-methyllysine; alternate occurs at positions 6, 9, and 13. N6-acetyl-N6-methyllysine; alternate is present on K13. The DNA-binding element occupies 17-21 (KRHRK). Position 92 is an N6-glutaryllysine (K92).

It belongs to the histone H4 family. In terms of assembly, the nucleosome is a histone octamer containing two molecules each of H2A, H2B, H3 and H4 assembled in one H3-H4 heterotetramer and two H2A-H2B heterodimers. The octamer wraps approximately 147 bp of DNA. Glutarylation at Lys-92 (H4K91glu) destabilizes nucleosomes by promoting dissociation of the H2A-H2B dimers from nucleosomes.

It localises to the nucleus. The protein localises to the chromosome. In terms of biological role, core component of nucleosome. Nucleosomes wrap and compact DNA into chromatin, limiting DNA accessibility to the cellular machineries which require DNA as a template. Histones thereby play a central role in transcription regulation, DNA repair, DNA replication and chromosomal stability. DNA accessibility is regulated via a complex set of post-translational modifications of histones, also called histone code, and nucleosome remodeling. This chain is Histone H4.2 (hhfB), found in Emericella nidulans (strain FGSC A4 / ATCC 38163 / CBS 112.46 / NRRL 194 / M139) (Aspergillus nidulans).